The sequence spans 251 residues: Thiamine thiazole synthase (251 aa).

Residues Ser34, 53-54 (EK), Gly61, Val125, and 151-153 (HVD) each bind NAD(+). The Fe cation site is built by Asp153 and His168. Residue Met216 coordinates NAD(+). Residue Arg226 participates in glycine binding.

This sequence belongs to the THI4 family. Homooctamer; tetramer of dimers. Fe(2+) serves as cofactor.

The catalysed reaction is hydrogen sulfide + glycine + NAD(+) = ADP-5-ethyl-4-methylthiazole-2-carboxylate + nicotinamide + 3 H2O + H(+). The protein operates within cofactor biosynthesis; thiamine diphosphate biosynthesis. Involved in the biosynthesis of the thiazole moiety of thiamine. Catalyzes the conversion of NAD and glycine to adenosine diphosphate 5-(2-hydroxyethyl)-4-methylthiazole-2-carboxylate (ADT), an adenylated thiazole intermediate, using free sulfide as a source of sulfur. The polypeptide is Thiamine thiazole synthase (Thermococcus kodakarensis (strain ATCC BAA-918 / JCM 12380 / KOD1) (Pyrococcus kodakaraensis (strain KOD1))).